We begin with the raw amino-acid sequence, 641 residues long: Sodium-dependent nutrient amino acid transporter 1 (641 aa).

The interval 1 to 34 (MELKGVQPSNGSANGNGTTNAASTEKADTEKQTA) is disordered. Residues 1 to 38 (MELKGVQPSNGSANGNGTTNAASTEKADTEKQTAERTN) are Cytoplasmic-facing. Low complexity predominate over residues 9 to 24 (SNGSANGNGTTNAAST). The segment covering 25 to 34 (EKADTEKQTA) has biased composition (basic and acidic residues). 3 helical membrane passes run 39 to 59 (WGNG…LGNV), 72 to 92 (GAFL…MYYL), and 109 to 129 (SVVP…ICII). 2 N-linked (GlcNAc...) asparagine glycosylation sites follow: Asn-183 and Asn-188. Transmembrane regions (helical) follow at residues 229-249 (PDWK…LVIM), 258-278 (AAYF…IRAV), 307-327 (AVVQ…MFAS), 341-361 (IVTT…FAIL), 401-421 (LFSV…IVAL), 441-461 (VALI…TPGG), 474-494 (TYVV…VYGL), 516-536 (CWSF…MATI), and 552-572 (IAGW…GLWY).

It belongs to the sodium:neurotransmitter symporter (SNF) (TC 2.A.22) family.

Its subcellular location is the membrane. Functionally, unusual broad substrate spectrum amino acid:sodium cotransporter that promotes absorption of the D isomers of essential amino acids. Neutral amino acids are the preferred substrates, especially methionine and phenylalanine. In Drosophila yakuba (Fruit fly), this protein is Sodium-dependent nutrient amino acid transporter 1.